Here is a 121-residue protein sequence, read N- to C-terminus: Somatostatin-1 (121 aa).

Residues 1 to 24 (MKMVSSSRLRCLLVLLLSLTASIS) form the signal peptide. The propeptide occupies 25-105 (CSFAGQRDSK…SGGPLLAPRE (81 aa)). A disordered region spans residues 76–99 (NFPLAEGGPEDAHADLERAASGGP). C110 and C121 are joined by a disulfide.

Belongs to the somatostatin family.

The protein localises to the secreted. In terms of biological role, somatostatin inhibits the release of somatotropin. This chain is Somatostatin-1 (sst1), found in Lophius americanus (American angler).